A 748-amino-acid polypeptide reads, in one-letter code: E3 ubiquitin-protein ligase SMURF2 (748 aa).

The region spanning 1-119 is the C2 domain; it reads MSNPGGRRNG…TGYQRLDLCK (119 aa). Lysine 119 is covalently cross-linked (Glycyl lysine isopeptide (Lys-Gly) (interchain with G-Cter in ubiquitin)). WW domains lie at 157–190, 251–284, and 297–330; these read NDLP…RPTR, PDLP…DPRV, and GPLP…DPRL. The 335-residue stretch at 414 to 748 folds into the HECT domain; the sequence is RPKDLWKRLM…IEETCGFAVE (335 aa). Cysteine 716 (glycyl thioester intermediate) is an active-site residue.

In terms of assembly, interacts (via WW domains) with SMAD1. Interacts (via WW domains) with SMAD2 (via PY-motif). Interacts (via WW domains) with SMAD3 (via PY-motif). Interacts with SMAD6. Interacts with SMAD7 (via PY-motif) and TGFBR1; SMAD7 recruits SMURF2 to the TGF-beta receptor and regulates its degradation. Does not interact with SMAD4; SMAD4 lacks a PY-motif. Interacts with AIMP1. Interacts with NDFIP1 and NDFIP2; this interaction activates the E3 ubiquitin-protein ligase. Interacts with TTC3. Auto-ubiquitinated and ubiquitinated in the presence of RNF11 and UBE2D1. Ubiquitinated by the SCF(FBXL15) complex and TTC3, leading to its degradation by the proteasome. 'Lys-48'-linked polyubiquitination mediated by TRAF4 at Lys-119 leads to SMURF2 proteasomal degradation.

The protein localises to the nucleus. Its subcellular location is the cytoplasm. It is found in the cell membrane. It localises to the membrane raft. It carries out the reaction S-ubiquitinyl-[E2 ubiquitin-conjugating enzyme]-L-cysteine + [acceptor protein]-L-lysine = [E2 ubiquitin-conjugating enzyme]-L-cysteine + N(6)-ubiquitinyl-[acceptor protein]-L-lysine.. Its pathway is protein modification; protein ubiquitination. With respect to regulation, activated by NDFIP1- and NDFIP2-binding. E3 ubiquitin-protein ligase which accepts ubiquitin from an E2 ubiquitin-conjugating enzyme in the form of a thioester and then directly transfers the ubiquitin to targeted substrates. Interacts with SMAD7 to trigger SMAD7-mediated transforming growth factor beta/TGF-beta receptor ubiquitin-dependent degradation, thereby down-regulating TGF-beta signaling. In addition, interaction with SMAD7 activates autocatalytic degradation, which is prevented by interaction with AIMP1. Also forms a stable complex with TGF-beta receptor-mediated phosphorylated SMAD1, SMAD2 and SMAD3, and targets SMAD1 and SMAD2 for ubiquitination and proteasome-mediated degradation. SMAD2 may recruit substrates, such as SNON, for ubiquitin-dependent degradation. Negatively regulates TGFB1-induced epithelial-mesenchymal transition and myofibroblast differentiation. This is E3 ubiquitin-protein ligase SMURF2 from Mus musculus (Mouse).